The following is a 189-amino-acid chain: Parkinson disease protein 7 homolog (189 aa).

At Ala-2 the chain carries N-acetylalanine; in Protein/nucleic acid deglycase DJ-1, N-terminally processed. S-palmitoyl cysteine attachment occurs at residues Cys-46 and Cys-53. Tyr-67 is modified (phosphotyrosine). Cys-106 serves as the catalytic Nucleophile. Cys-106 is subject to Cysteine sulfinic acid (-SO2H); alternate. The S-palmitoyl cysteine; alternate moiety is linked to residue Cys-106. The active site involves His-126. Lys-130 is covalently cross-linked (Glycyl lysine isopeptide (Lys-Gly) (interchain with G-Cter in SUMO)). N6-acetyllysine is present on Lys-148. Lys-182 is modified (N6-succinyllysine).

The protein belongs to the peptidase C56 family. In terms of assembly, homodimer. Binds EFCAB6/DJBP and PIAS2. Part of a ternary complex containing PARK7, EFCAB6/DJBP and AR. Interacts (via N-terminus) with OTUD7B. Interacts with BBS1, HIPK1, CLCF1 and MTERF. Forms a complex with PINK1 and PRKN. Interacts (via C-terminus) with NCF1; the interaction is enhanced by LPS and modulates NCF1 phosphorylation and membrane translocation. Interacts with NENF. The cofactor is Deglycase activity does not require glutathione as a cofactor, however, glycated glutathione constitutes a PARK7 substrate.. Sumoylated on Lys-130 by PIAS2 or PIAS4; which is essential for cell-growth promoting activity and transforming activity. Post-translationally, undergoes cleavage of a C-terminal peptide and subsequent activation of protease activity in response to oxidative stress. As to expression, detected in liver, heart, spleen and testis (at protein level). Detected in liver, heart, spleen, kidney, epididymidis, vas deferens, sperm cells and testis.

It is found in the cell membrane. The protein localises to the cytoplasm. The protein resides in the nucleus. Its subcellular location is the membrane raft. It localises to the mitochondrion. It is found in the endoplasmic reticulum. The catalysed reaction is N(omega)-(1-hydroxy-2-oxopropyl)-L-arginyl-[protein] + H2O = lactate + L-arginyl-[protein] + H(+). It carries out the reaction N(6)-(1-hydroxy-2-oxopropyl)-L-lysyl-[protein] + H2O = lactate + L-lysyl-[protein] + H(+). The enzyme catalyses S-(1-hydroxy-2-oxopropyl)-L-cysteinyl-[protein] + H2O = lactate + L-cysteinyl-[protein] + H(+). It catalyses the reaction N(omega)-(1-hydroxy-2-oxoethyl)-L-arginyl-[protein] + H2O = L-arginyl-[protein] + glycolate + H(+). The catalysed reaction is N(6)-(1-hydroxy-2-oxoethyl)-L-lysyl-[protein] + H2O = glycolate + L-lysyl-[protein] + H(+). It carries out the reaction S-(1-hydroxy-2-oxoethyl)-L-cysteinyl-[protein] + H2O = glycolate + L-cysteinyl-[protein] + H(+). The enzyme catalyses N(2)-(1-hydroxy-2-oxopropyl)-dGTP + H2O = lactate + dGTP + H(+). It catalyses the reaction N(2)-(1-hydroxy-2-oxopropyl)-GTP + H2O = lactate + GTP + H(+). The catalysed reaction is N(2)-(1-hydroxy-2-oxopropyl)-GDP + H2O = lactate + GDP + H(+). It carries out the reaction N(2)-(1-hydroxy-2-oxopropyl)-GMP + H2O = lactate + GMP + H(+). The enzyme catalyses N(2)-(1-hydroxy-2-oxoethyl)-dGTP + H2O = dGTP + glycolate + H(+). It catalyses the reaction N(2)-(1-hydroxy-2-oxoethyl)-GTP + H2O = glycolate + GTP + H(+). The catalysed reaction is N(2)-(1-hydroxy-2-oxoethyl)-GDP + H2O = glycolate + GDP + H(+). It carries out the reaction N(2)-(1-hydroxy-2-oxoethyl)-GMP + H2O = glycolate + GMP + H(+). The enzyme catalyses an N(2)-(1-hydroxy-2-oxopropyl)-guanosine in RNA + H2O = a guanosine in RNA + lactate + H(+). It catalyses the reaction an N(2)-(1-hydroxy-2-oxopropyl)-2'-deoxyguanosine in DNA + H2O = a 2'-deoxyguanosine in DNA + lactate + H(+). The catalysed reaction is an N(2)-(1-hydroxy-2-oxoethyl)-guanosine in RNA + H2O = a guanosine in RNA + glycolate + H(+). It carries out the reaction an N(2)-(1-hydroxy-2-oxoethyl)-2'-deoxyguanosine in DNA + H2O = a 2'-deoxyguanosine in DNA + glycolate + H(+). Functionally, multifunctional protein with controversial molecular function which plays an important role in cell protection against oxidative stress and cell death acting as oxidative stress sensor and redox-sensitive chaperone and protease. It is involved in neuroprotective mechanisms like the stabilization of NFE2L2 and PINK1 proteins, male fertility as a positive regulator of androgen signaling pathway as well as cell growth and transformation through, for instance, the modulation of NF-kappa-B signaling pathway. Has been described as a protein and nucleotide deglycase that catalyzes the deglycation of the Maillard adducts formed between amino groups of proteins or nucleotides and reactive carbonyl groups of glyoxals. But this function is rebuted by other works. As a protein deglycase, repairs methylglyoxal- and glyoxal-glycated proteins, and releases repaired proteins and lactate or glycolate, respectively. Deglycates cysteine, arginine and lysine residues in proteins, and thus reactivates these proteins by reversing glycation by glyoxals. Acts on early glycation intermediates (hemithioacetals and aminocarbinols), preventing the formation of advanced glycation endproducts (AGE) that cause irreversible damage. Also functions as a nucleotide deglycase able to repair glycated guanine in the free nucleotide pool (GTP, GDP, GMP, dGTP) and in DNA and RNA. Is thus involved in a major nucleotide repair system named guanine glycation repair (GG repair), dedicated to reversing methylglyoxal and glyoxal damage via nucleotide sanitization and direct nucleic acid repair. Protects histones from adduction by methylglyoxal, controls the levels of methylglyoxal-derived argininine modifications on chromatin. Able to remove the glycations and restore histone 3, histone glycation disrupts both local and global chromatin architecture by altering histone-DNA interactions as well as histone acetylation and ubiquitination levels. Displays a very low glyoxalase activity that may reflect its deglycase activity. Eliminates hydrogen peroxide and protects cells against hydrogen peroxide-induced cell death. Required for correct mitochondrial morphology and function as well as for autophagy of dysfunctional mitochondria. Plays a role in regulating expression or stability of the mitochondrial uncoupling proteins SLC25A14 and SLC25A27 in dopaminergic neurons of the substantia nigra pars compacta and attenuates the oxidative stress induced by calcium entry into the neurons via L-type channels during pacemaking. Regulates astrocyte inflammatory responses, may modulate lipid rafts-dependent endocytosis in astrocytes and neuronal cells. In pancreatic islets, involved in the maintenance of mitochondrial reactive oxygen species (ROS) levels and glucose homeostasis in an age- and diet dependent manner. Protects pancreatic beta cells from cell death induced by inflammatory and cytotoxic setting. Binds to a number of mRNAs containing multiple copies of GG or CC motifs and partially inhibits their translation but dissociates following oxidative stress. Metal-binding protein able to bind copper as well as toxic mercury ions, enhances the cell protection mechanism against induced metal toxicity. In macrophages, interacts with the NADPH oxidase subunit NCF1 to direct NADPH oxidase-dependent ROS production, and protects against sepsis. The sequence is that of Parkinson disease protein 7 homolog (PARK7) from Mesocricetus auratus (Golden hamster).